We begin with the raw amino-acid sequence, 207 residues long: Large ribosomal subunit protein uL4 (207 aa).

Residues 59–78 (GSGKKPFKQKGTGQARQGCK) are disordered.

The protein belongs to the universal ribosomal protein uL4 family. In terms of assembly, part of the 50S ribosomal subunit.

One of the primary rRNA binding proteins, this protein initially binds near the 5'-end of the 23S rRNA. It is important during the early stages of 50S assembly. It makes multiple contacts with different domains of the 23S rRNA in the assembled 50S subunit and ribosome. Its function is as follows. Forms part of the polypeptide exit tunnel. The protein is Large ribosomal subunit protein uL4 of Geotalea daltonii (strain DSM 22248 / JCM 15807 / FRC-32) (Geobacter daltonii).